The primary structure comprises 327 residues: Probable NAD(P)H-dependent D-xylose reductase xyl1 (327 aa).

The active-site Proton donor is Tyr-57. His-119 is a binding site for substrate. NAD(+)-binding positions include 173–174 (SN), 222–231 (SSLGPQSFIE), and 278–288 (KSNNPDRLAQN).

The protein belongs to the aldo/keto reductase family.

The enzyme catalyses xylitol + NAD(+) = D-xylose + NADH + H(+). The catalysed reaction is xylitol + NADP(+) = D-xylose + NADPH + H(+). It participates in carbohydrate metabolism; D-xylose degradation. Its function is as follows. Catalyzes the initial reaction in the xylose utilization pathway by reducing D-xylose into xylitol. Xylose is a major component of hemicelluloses such as xylan. Most fungi utilize D-xylose via three enzymatic reactions, xylose reductase (XR), xylitol dehydrogenase (XDH), and xylulokinase, to form xylulose 5-phosphate, which enters pentose phosphate pathway. The sequence is that of Probable NAD(P)H-dependent D-xylose reductase xyl1 (xyl1) from Arthroderma otae (strain ATCC MYA-4605 / CBS 113480) (Microsporum canis).